A 189-amino-acid polypeptide reads, in one-letter code: Chitin synthase 1 (189 aa).

It belongs to the chitin synthase family. Class I subfamily.

Its subcellular location is the cell membrane. The enzyme catalyses [(1-&gt;4)-N-acetyl-beta-D-glucosaminyl](n) + UDP-N-acetyl-alpha-D-glucosamine = [(1-&gt;4)-N-acetyl-beta-D-glucosaminyl](n+1) + UDP + H(+). Polymerizes chitin, a structural polymer of the cell wall and septum, by transferring the sugar moiety of UDP-GlcNAc to the non-reducing end of the growing chitin polymer. This chain is Chitin synthase 1 (CHS1), found in Ajellomyces capsulatus (Darling's disease fungus).